The sequence spans 355 residues: Peptide chain release factor 1 (355 aa).

An N5-methylglutamine modification is found at Gln233. Residues 280–293 are compositionally biased toward basic and acidic residues; the sequence is ERRKKEQERADSRR. The interval 280-308 is disordered; that stretch reads ERRKKEQERADSRRGQVGSGDRSERIRTY.

This sequence belongs to the prokaryotic/mitochondrial release factor family. In terms of processing, methylated by PrmC. Methylation increases the termination efficiency of RF1.

The protein resides in the cytoplasm. In terms of biological role, peptide chain release factor 1 directs the termination of translation in response to the peptide chain termination codons UAG and UAA. In Rickettsia felis (strain ATCC VR-1525 / URRWXCal2) (Rickettsia azadi), this protein is Peptide chain release factor 1.